The following is a 344-amino-acid chain: Dihydroorotase (344 aa).

Positions 13 and 15 each coordinate Zn(2+). Residues 15–17 (HVR) and N41 each bind substrate. Zn(2+) is bound by residues K99, H136, and H174. K99 is subject to N6-carboxylysine. H136 lines the substrate pocket. L219 lines the substrate pocket. Residue D247 participates in Zn(2+) binding. The active site involves D247. The substrate site is built by H251 and A263.

The protein belongs to the metallo-dependent hydrolases superfamily. DHOase family. Class II DHOase subfamily. In terms of assembly, homodimer. Zn(2+) is required as a cofactor.

It carries out the reaction (S)-dihydroorotate + H2O = N-carbamoyl-L-aspartate + H(+). It participates in pyrimidine metabolism; UMP biosynthesis via de novo pathway; (S)-dihydroorotate from bicarbonate: step 3/3. Functionally, catalyzes the reversible cyclization of carbamoyl aspartate to dihydroorotate. The polypeptide is Dihydroorotase (Aromatoleum aromaticum (strain DSM 19018 / LMG 30748 / EbN1) (Azoarcus sp. (strain EbN1))).